We begin with the raw amino-acid sequence, 364 residues long: Probable dual-specificity RNA methyltransferase RlmN (364 aa).

The active-site Proton acceptor is Glu107. The region spanning 113–346 is the Radical SAM core domain; it reads HDYGNSVCVT…ATIRREQGSD (234 aa). Cys120 and Cys351 are oxidised to a cystine. Residues Cys127, Cys131, and Cys134 each coordinate [4Fe-4S] cluster. S-adenosyl-L-methionine contacts are provided by residues 177–178, Ser209, 232–234, and Asn308; these read GE and SLH. Cys351 (S-methylcysteine intermediate) is an active-site residue.

Belongs to the radical SAM superfamily. RlmN family. It depends on [4Fe-4S] cluster as a cofactor.

It is found in the cytoplasm. It catalyses the reaction adenosine(2503) in 23S rRNA + 2 reduced [2Fe-2S]-[ferredoxin] + 2 S-adenosyl-L-methionine = 2-methyladenosine(2503) in 23S rRNA + 5'-deoxyadenosine + L-methionine + 2 oxidized [2Fe-2S]-[ferredoxin] + S-adenosyl-L-homocysteine. It carries out the reaction adenosine(37) in tRNA + 2 reduced [2Fe-2S]-[ferredoxin] + 2 S-adenosyl-L-methionine = 2-methyladenosine(37) in tRNA + 5'-deoxyadenosine + L-methionine + 2 oxidized [2Fe-2S]-[ferredoxin] + S-adenosyl-L-homocysteine. In terms of biological role, specifically methylates position 2 of adenine 2503 in 23S rRNA and position 2 of adenine 37 in tRNAs. Confers resistance to some classes of antibiotics. The sequence is that of Probable dual-specificity RNA methyltransferase RlmN from Staphylococcus aureus (strain bovine RF122 / ET3-1).